A 658-amino-acid chain; its full sequence is PTS system 2-O-alpha-mannosyl-D-glycerate-specific EIIABC component (658 aa).

At 1–313 the chain is on the periplasmic side; it reads MVLFYRAHWR…TELKQALLSG (313 aa). A PTS EIIA type-2 domain is found at 25 to 171; the sequence is TLTHRDALCL…DELLSALDDK (147 aa). The active-site Tele-phosphohistidine intermediate; for EIIA activity is histidine 87. Histidine 87 carries the post-translational modification Phosphohistidine; by HPr. The PTS EIIB type-2 domain maps to 186–282; the sequence is IVCVTACPAG…AEALIQQALT (97 aa). The active-site Phosphocysteine intermediate; for EIIB activity is cysteine 192. Cysteine 192 carries the post-translational modification Phosphocysteine; by EIIA. The 336-residue stretch at 306 to 641 folds into the PTS EIIC type-2 domain; the sequence is LKQALLSGIS…AISTAILLMW (336 aa). The chain crosses the membrane as a helical span at residues 314–334; it reads ISFAVPLIVAGGTVLAVAVLL. Over 335-358 the chain is Cytoplasmic; the sequence is SQIFGLQDLFNEENSWLWMYRKLG. The chain crosses the membrane as a helical span at residues 359-379; sequence GGLLGILMVPVLAAYTAYSLA. At 380 to 389 the chain is on the periplasmic side; that stretch reads DKPALAPGFA. Residues 390–410 form a helical membrane-spanning segment; the sequence is AGLAANMIGSGFLGAVVGGLI. Residues 411 to 433 lie on the Cytoplasmic side of the membrane; that stretch reads AGYLMRWVKNHLRLSSKFNGFLT. Residues 434–454 form a helical membrane-spanning segment; sequence FYLYPVLGTLGAGSLMLFVVG. Residues 455–474 lie on the Periplasmic side of the membrane; sequence EPVAWINNSLTAWLNGLSGS. The chain crosses the membrane as a helical span at residues 475–495; it reads NALLLGAILGFMCSFDLGGPV. Over 496-500 the chain is Cytoplasmic; that stretch reads NKAAY. Residues 501–521 form a helical membrane-spanning segment; it reads AFCLGAMANGVYGPYAIFASV. Residues 522-551 lie on the Periplasmic side of the membrane; it reads KMVSAFTVTASTMLAPRLFKEFEIETGKST. A helical membrane pass occupies residues 552–572; sequence WLLGLAGITEGAIPMAIEDPL. Arginine 573 is a topological domain (cytoplasmic). The helical transmembrane segment at 574–594 threads the bilayer; it reads VIGSFVLGSMVTGAIVGAMNI. Residues 595 to 620 lie on the Periplasmic side of the membrane; sequence GLSTPGAGIFSLFLLHDNGAGGVMAA. Residues 621–641 form a helical membrane-spanning segment; that stretch reads IGWFGAALVGAAISTAILLMW. Over 642-658 the chain is Cytoplasmic; that stretch reads RRHAVKHGNYLTDGVMP.

Its subcellular location is the cell inner membrane. The enzyme catalyses (2R)-2-O-(alpha-D-mannosyl)-glycerate(out) + N(pros)-phospho-L-histidyl-[protein] = (2R)-2-O-(6-phospho-alpha-D-mannosyl)-glycerate(in) + L-histidyl-[protein]. In terms of biological role, the phosphoenolpyruvate-dependent sugar phosphotransferase system (sugar PTS), a major carbohydrate active transport system, catalyzes the phosphorylation of incoming sugar substrates concomitantly with their translocation across the cell membrane. This system is involved in mannosyl-D-glycerate transport. Also involved in thermoinduction of ompC. This chain is PTS system 2-O-alpha-mannosyl-D-glycerate-specific EIIABC component, found in Escherichia coli (strain K12).